Consider the following 802-residue polypeptide: Nuclear polyadenylated RNA-binding protein 3 (802 aa).

2 disordered regions span residues 1–174 (MSDE…RRET) and 252–293 (ALSV…RMRF). The span at 22 to 34 (SNSNENELMNNSS) shows a compositional bias: low complexity. Residues 37–73 (DGIEFDAPEEEREAEREEENEEQHELEDVNDEEEEDK) show a composition bias toward acidic residues. T86 is modified (phosphothreonine). 2 stretches are compositionally biased toward acidic residues: residues 101–139 (DDDDDDNEEEEEEEEDDDDDDDDDDDDEEEEEEEEEEGN) and 149–158 (AAEDGEDEED). Residues 159-174 (KKDKTKDKEVELRRET) are compositionally biased toward basic and acidic residues. Low complexity predominate over residues 260–276 (STISTTASASATSGARS). Over residues 277–293 (NDQRKPPLSDAQRRMRF) the composition is skewed to basic and acidic residues. An RRM domain is found at 330–401 (SRLFIGNLPL…KKLILEVSSS (72 aa)). Phosphothreonine is present on T451. Disordered stretches follow at residues 571–675 (IYGA…PMDQ) and 717–802 (MQGQ…KLQK). Pro residues predominate over residues 575–590 (PPLPVPNGPAVGPPPQ). The segment covering 593-614 (YYQGYSMPPPQQQQQQPYGNYG) has biased composition (low complexity). Residues 632–642 (MNQSYGRYQTS) show a composition bias toward polar residues. Low complexity-rich tracts occupy residues 651–661 (QIPQGYGRYQA) and 717–738 (MQGQAPQQQQQQLGGYSSMNSS). Positions 745–754 (TNYNGQNISA) are enriched in polar residues. The span at 757–769 (SAPPMSHQPPPPQ) shows a compositional bias: pro residues. The span at 770-785 (QQQQQQQQQQQQQQQP) shows a compositional bias: low complexity.

It localises to the nucleus. The protein localises to the nucleoplasm. Functionally, may be required for packaging pre-mRNAs into ribonucleoprotein structures amenable to efficient nuclear RNA processing. Binds to poly(A)+ RNA. Appears to act in the maintenance of CLN3 mRNA levels. This Saccharomyces cerevisiae (strain ATCC 204508 / S288c) (Baker's yeast) protein is Nuclear polyadenylated RNA-binding protein 3 (NAB3).